The sequence spans 1079 residues: Carbamoyl phosphate synthase large chain (1079 aa).

Residues 2 to 403 (PKSTDIKSIL…SIQKAIRGLE (402 aa)) form a carboxyphosphate synthetic domain region. Arg-129, Arg-169, Gly-175, Gly-176, Glu-208, Leu-210, Glu-215, Gly-241, Ile-242, His-243, Gln-285, and Glu-299 together coordinate ATP. The ATP-grasp 1 domain occupies 133–328 (EHSMKKLNLE…IAKIAAKLAI (196 aa)). The Mg(2+) site is built by Gln-285, Glu-299, and Asn-301. Positions 285, 299, and 301 each coordinate Mn(2+). Residues 404-553 (VGASGFDSKI…YSTWEDECES (150 aa)) form an oligomerization domain region. Positions 554-936 (HPSKNNKKII…AFSKSMLGAH (383 aa)) are carbamoyl phosphate synthetic domain. In terms of domain architecture, ATP-grasp 2 spans 679–870 (QKTVNKLRLQ…LAKISVRVMC (192 aa)). Residues Arg-715, Gln-754, Leu-756, Glu-761, Gly-786, Val-787, His-788, Ser-789, Gln-829, and Glu-841 each contribute to the ATP site. Mg(2+) contacts are provided by Gln-829, Glu-841, and Asn-843. Mn(2+) contacts are provided by Gln-829, Glu-841, and Asn-843. Residues 937 to 1079 (TNMKKSGRVL…KKIQLFYTKK (143 aa)) enclose the MGS-like domain. The interval 937-1079 (TNMKKSGRVL…KKIQLFYTKK (143 aa)) is allosteric domain.

It belongs to the CarB family. In terms of assembly, composed of two chains; the small (or glutamine) chain promotes the hydrolysis of glutamine to ammonia, which is used by the large (or ammonia) chain to synthesize carbamoyl phosphate. Tetramer of heterodimers (alpha,beta)4. Requires Mg(2+) as cofactor. Mn(2+) is required as a cofactor.

It carries out the reaction hydrogencarbonate + L-glutamine + 2 ATP + H2O = carbamoyl phosphate + L-glutamate + 2 ADP + phosphate + 2 H(+). The catalysed reaction is hydrogencarbonate + NH4(+) + 2 ATP = carbamoyl phosphate + 2 ADP + phosphate + 2 H(+). It functions in the pathway amino-acid biosynthesis; L-arginine biosynthesis; carbamoyl phosphate from bicarbonate: step 1/1. The protein operates within pyrimidine metabolism; UMP biosynthesis via de novo pathway; (S)-dihydroorotate from bicarbonate: step 1/3. Large subunit of the glutamine-dependent carbamoyl phosphate synthetase (CPSase). CPSase catalyzes the formation of carbamoyl phosphate from the ammonia moiety of glutamine, carbonate, and phosphate donated by ATP, constituting the first step of 2 biosynthetic pathways, one leading to arginine and/or urea and the other to pyrimidine nucleotides. The large subunit (synthetase) binds the substrates ammonia (free or transferred from glutamine from the small subunit), hydrogencarbonate and ATP and carries out an ATP-coupled ligase reaction, activating hydrogencarbonate by forming carboxy phosphate which reacts with ammonia to form carbamoyl phosphate. This is Carbamoyl phosphate synthase large chain from Buchnera aphidicola subsp. Acyrthosiphon pisum (strain APS) (Acyrthosiphon pisum symbiotic bacterium).